We begin with the raw amino-acid sequence, 1386 residues long: Pleckstrin homology domain-containing family G member 2 (1386 aa).

Disordered regions lie at residues 1–21 and 36–82; these read MPEG…GCGR and TAPA…PLPG. 2 stretches are compositionally biased toward low complexity: residues 8 to 17 and 45 to 62; these read LSLSKPSPSL and SPRG…GSEG. Serine 90 is modified (phosphoserine). A DH domain is found at 102-283; it reads RLERVAREIV…TAVAWYINDM (182 aa). In terms of domain architecture, PH spans 313-411; the sequence is ELVLEGAFRG…WIHCLQRLFF (99 aa). 5 disordered regions span residues 436–540, 554–612, 701–739, 790–815, and 829–859; these read KSKP…PSGT, GLRD…PSPL, EPAE…EEGV, ILED…RTAS, and QQMQ…SPCL. At threonine 445 the chain carries Phosphothreonine. Serine 450 and serine 469 each carry phosphoserine. A compositionally biased stretch (acidic residues) spans 592–603; that stretch reads SEEEEEEEEGLE. A phosphoserine mark is found at serine 911 and serine 1049. 2 disordered regions span residues 1037 to 1099 and 1162 to 1191; these read PVPK…PLPC and TSPK…DTQV. Composition is skewed to polar residues over residues 1048-1059 and 1073-1086; these read ESPTNIPLTKQG and QPIQ…SSLD. A Phosphothreonine modification is found at threonine 1257. Residues serine 1261 and serine 1310 each carry the phosphoserine modification. Disordered regions lie at residues 1291–1333 and 1367–1386; these read ARRQ…ARRL and TQES…PFHM. Residues 1301–1317 show a composition bias toward low complexity; that stretch reads PAASRGSWSSAPTSRAS. The segment covering 1318-1330 has biased composition (pro residues); that stretch reads SPPPQPQPPPPPA.

In terms of biological role, may be a transforming oncogene with exchange activity for CDC42. May be a guanine-nucleotide exchange factor (GEF) for RAC1 and CDC42. Activated by the binding to subunits beta and gamma of the heterotrimeric guanine nucleotide-binding protein (G protein). Involved in the regulation of actin polymerization. This Homo sapiens (Human) protein is Pleckstrin homology domain-containing family G member 2 (PLEKHG2).